A 70-amino-acid polypeptide reads, in one-letter code: Small ribosomal subunit protein bS21B (70 aa).

This sequence belongs to the bacterial ribosomal protein bS21 family.

The chain is Small ribosomal subunit protein bS21B from Cupriavidus metallidurans (strain ATCC 43123 / DSM 2839 / NBRC 102507 / CH34) (Ralstonia metallidurans).